A 118-amino-acid polypeptide reads, in one-letter code: Large ribosomal subunit protein bL19 (118 aa).

It belongs to the bacterial ribosomal protein bL19 family.

This protein is located at the 30S-50S ribosomal subunit interface and may play a role in the structure and function of the aminoacyl-tRNA binding site. The polypeptide is Large ribosomal subunit protein bL19 (Parafrankia sp. (strain EAN1pec)).